The sequence spans 247 residues: Carboxy-S-adenosyl-L-methionine synthase (247 aa).

S-adenosyl-L-methionine is bound by residues tyrosine 40, 65–67 (GCS), 90–91 (DN), 122–123 (DI), asparagine 137, and arginine 204.

It belongs to the class I-like SAM-binding methyltransferase superfamily. Cx-SAM synthase family. In terms of assembly, homodimer.

It catalyses the reaction prephenate + S-adenosyl-L-methionine = carboxy-S-adenosyl-L-methionine + 3-phenylpyruvate + H2O. Catalyzes the conversion of S-adenosyl-L-methionine (SAM) to carboxy-S-adenosyl-L-methionine (Cx-SAM). The sequence is that of Carboxy-S-adenosyl-L-methionine synthase from Pseudomonas syringae pv. tomato (strain ATCC BAA-871 / DC3000).